The chain runs to 286 residues: Bifunctional protein FolD (286 aa).

NADP(+) contacts are provided by residues 165–167, S190, and I231; that span reads GRS.

Belongs to the tetrahydrofolate dehydrogenase/cyclohydrolase family. As to quaternary structure, homodimer.

It carries out the reaction (6R)-5,10-methylene-5,6,7,8-tetrahydrofolate + NADP(+) = (6R)-5,10-methenyltetrahydrofolate + NADPH. It catalyses the reaction (6R)-5,10-methenyltetrahydrofolate + H2O = (6R)-10-formyltetrahydrofolate + H(+). The protein operates within one-carbon metabolism; tetrahydrofolate interconversion. Functionally, catalyzes the oxidation of 5,10-methylenetetrahydrofolate to 5,10-methenyltetrahydrofolate and then the hydrolysis of 5,10-methenyltetrahydrofolate to 10-formyltetrahydrofolate. This Thermodesulfovibrio yellowstonii (strain ATCC 51303 / DSM 11347 / YP87) protein is Bifunctional protein FolD.